A 303-amino-acid chain; its full sequence is Polyisoprenyl-teichoic acid--peptidoglycan teichoic acid transferase TagU (303 aa).

Topologically, residues 1–4 (MKKK) are cytoplasmic. A helical; Signal-anchor for type II membrane protein membrane pass occupies residues 5–25 (ILFWVLGILGVLIIGGGIYAY). Residues 26–303 (NVYSSVSNTL…KLRTHLEVTK (278 aa)) lie on the Extracellular side of the membrane.

This sequence belongs to the LytR/CpsA/Psr (LCP) family.

Its subcellular location is the cell membrane. It functions in the pathway cell wall biogenesis. Its function is as follows. May catalyze the final step in cell wall teichoic acid biosynthesis, the transfer of the anionic cell wall polymers (APs) from their lipid-linked precursor to the cell wall peptidoglycan (PG). In Bacillus cereus (strain ZK / E33L), this protein is Polyisoprenyl-teichoic acid--peptidoglycan teichoic acid transferase TagU.